The sequence spans 108 residues: Large ribosomal subunit protein uL24 (108 aa).

This sequence belongs to the universal ribosomal protein uL24 family. In terms of assembly, part of the 50S ribosomal subunit.

Its function is as follows. One of two assembly initiator proteins, it binds directly to the 5'-end of the 23S rRNA, where it nucleates assembly of the 50S subunit. In terms of biological role, one of the proteins that surrounds the polypeptide exit tunnel on the outside of the subunit. This chain is Large ribosomal subunit protein uL24, found in Frankia casuarinae (strain DSM 45818 / CECT 9043 / HFP020203 / CcI3).